The primary structure comprises 335 residues: Methionine import ATP-binding protein MetN 1 (335 aa).

Residues 2-242 form the ABC transporter domain; it reads IEFHNVHKTY…PQHATTRRFV (241 aa). 38–45 serves as a coordination point for ATP; it reads GHSGAGKS.

This sequence belongs to the ABC transporter superfamily. Methionine importer (TC 3.A.1.24) family. As to quaternary structure, the complex is composed of two ATP-binding proteins (MetN), two transmembrane proteins (MetI) and a solute-binding protein (MetQ).

Its subcellular location is the cell inner membrane. It carries out the reaction L-methionine(out) + ATP + H2O = L-methionine(in) + ADP + phosphate + H(+). The catalysed reaction is D-methionine(out) + ATP + H2O = D-methionine(in) + ADP + phosphate + H(+). Its function is as follows. Part of the ABC transporter complex MetNIQ involved in methionine import. Responsible for energy coupling to the transport system. This is Methionine import ATP-binding protein MetN 1 from Pseudomonas syringae pv. syringae (strain B728a).